We begin with the raw amino-acid sequence, 311 residues long: Olfactory receptor 6C3 (311 aa).

Residues 1-22 (MNHTMVTEFVLLGLSDDPDLQI) lie on the Extracellular side of the membrane. Asn2 carries an N-linked (GlcNAc...) asparagine glycan. The chain crosses the membrane as a helical span at residues 23–43 (VIFLFLFITYILSVTGNLTII). Residues 44–51 (TLTFVDSH) are Cytoplasmic-facing. A helical membrane pass occupies residues 52–72 (LQTPMYFFLRNFSFLEISFTT). The Extracellular portion of the chain corresponds to 73–96 (VCIPRFLGAIITRNKTISYNNCAA). Cys94 and Cys186 are oxidised to a cystine. Residues 97-117 (QLFFFIFMGVTEFYILTAMSY) form a helical membrane-spanning segment. Over 118–136 (DRYVAICKPLHYTSIMNRK) the chain is Cytoplasmic. The helical transmembrane segment at 137 to 157 (LCTLLVLCAWLSGFLTIFPPL) threads the bilayer. At 158–194 (MLLLQLDYCASNVIDHFACDYFPLLQLSCSDTWLLEV) the chain is on the extracellular side. The helical transmembrane segment at 195-214 (IGFYFALVTLLFTLALVILS) threads the bilayer. The Cytoplasmic segment spans residues 215–234 (YMYIIRTILRIPSASQRKKA). A helical transmembrane segment spans residues 235–255 (FSTCSSHMIVISISYGSCIFM). The Extracellular segment spans residues 256-268 (YANPSAKEKASLT). The helical transmembrane segment at 269–289 (KGIAILNTSVAPMLNPFIYTL) threads the bilayer. Residues 290 to 311 (RNQQVKQAFKNVVHKVVFYANQ) are Cytoplasmic-facing.

The protein belongs to the G-protein coupled receptor 1 family.

It localises to the cell membrane. Functionally, odorant receptor. The chain is Olfactory receptor 6C3 (OR6C3) from Homo sapiens (Human).